The chain runs to 826 residues: MKMKHFTRLLSLFFILITSLSLAKSTIVSHDERAITINGKRRILLSGSIHYPRSTADMWPDLINKAKDGGLDAIETYVFWNAHEPKRREYDFSGNLDVVRFIKTIQDAGLYSVLRIGPYVCAEWNYGGFPVWLHNMPNMKFRTVNPSFMNEMQNFTTKIVKMMKEEKLFASQGGPIILAQIENEYGNVISSYGAEGKAYIDWCANMANSLDIGVPWLMCQQPNAPQPMLETCNGFYCDQYEPTNPSTPKMWTENWTGWFKNWGGKHPYRTAEDLAFSVARFFQTGGTFQNYYMYHGGTNFGRVAGGPYITTSYDYHAPLDEFGNLNQPKWGHLKQLHTVLKSMEKSLTYGNISRIDLGNSIKATIYTTKEGSSCFIGNVNATADALVNFKGKDYHVPAWSVSVLPDCDKEAYNTAKVNTQTSIMTEDSSKPERLEWTWRPESAQKMILKGSGDLIAKGLVDQKDVTNDASDYLWYMTRLHLDKKDPLWSRNMTLRVHSNAHVLHAYVNGKYVGNQFVKDGKFDYRFERKVNHLVHGTNHISLLSVSVGLQNYGPFFESGPTGINGPVSLVGYKGEETIEKDLSQHQWDYKIGLNGYNDKLFSIKSVGHQKWANEKLPTGRMLTWYKAKFKAPLGKEPVIVDLNGLGKGEAWINGQSIGRYWPSFNSSDDGCKDECDYRGAYGSDKCAFMCGKPTQRWYHVPRSFLNASGHNTITLFEEMGGNPSMVNFKTVVVGTVCARAHEHNKVELSCHNRPISAVKFASFGNPLGHCGSFAVGTCQGDKDAAKTVAKECVGKLNCTVNVSSDTFGSTLDCGDSPKKLAVELEC.

The first 25 residues, 1–25 (MKMKHFTRLLSLFFILITSLSLAKS), serve as a signal peptide directing secretion. N-linked (GlcNAc...) asparagine glycosylation is present at Asn154. The active-site Proton donor is Glu184. Catalysis depends on Glu253, which acts as the Nucleophile. N-linked (GlcNAc...) asparagine glycans are attached at residues Asn254, Asn351, Asn380, Asn491, Asn665, Asn706, Asn797, and Asn801. An SUEL-type lectin domain is found at 740-826 (AHEHNKVELS…PKKLAVELEC (87 aa)).

This sequence belongs to the glycosyl hydrolase 35 family. In terms of tissue distribution, expressed in flowers.

It localises to the secreted. It is found in the extracellular space. Its subcellular location is the apoplast. The catalysed reaction is Hydrolysis of terminal non-reducing beta-D-galactose residues in beta-D-galactosides.. The sequence is that of Beta-galactosidase 7 (BGAL7) from Arabidopsis thaliana (Mouse-ear cress).